A 671-amino-acid chain; its full sequence is UvrABC system protein B (671 aa).

Residues 25–412 (EGIDAGLAHQ…AGRIVEQVVR (388 aa)) form the Helicase ATP-binding domain. Residue 38-45 (GVTGSGKT) coordinates ATP. The short motif at 91 to 114 (YYDYYQPEAYVPSSDTFIEKDASI) is the Beta-hairpin element. The Helicase C-terminal domain occupies 429–582 (QVDDLLSEIH…QIAFNLEHGI (154 aa)). Residues 601–624 (PGSRSKKRKGMAKAAEENARYENE) are disordered. Residues 614–624 (AAEENARYENE) are compositionally biased toward basic and acidic residues. Residues 632–667 (NKRIRQLEEKMYQLARDLEFEAAAQMRDEIGKLRER) form the UVR domain.

The protein belongs to the UvrB family. Forms a heterotetramer with UvrA during the search for lesions. Interacts with UvrC in an incision complex.

The protein localises to the cytoplasm. The UvrABC repair system catalyzes the recognition and processing of DNA lesions. A damage recognition complex composed of 2 UvrA and 2 UvrB subunits scans DNA for abnormalities. Upon binding of the UvrA(2)B(2) complex to a putative damaged site, the DNA wraps around one UvrB monomer. DNA wrap is dependent on ATP binding by UvrB and probably causes local melting of the DNA helix, facilitating insertion of UvrB beta-hairpin between the DNA strands. Then UvrB probes one DNA strand for the presence of a lesion. If a lesion is found the UvrA subunits dissociate and the UvrB-DNA preincision complex is formed. This complex is subsequently bound by UvrC and the second UvrB is released. If no lesion is found, the DNA wraps around the other UvrB subunit that will check the other stand for damage. The sequence is that of UvrABC system protein B from Pseudomonas syringae pv. syringae (strain B728a).